Consider the following 512-residue polypeptide: tRNA-guanine(15) transglycosylase (512 aa).

The active-site Nucleophile is the D85. D120 lines the substrate pocket. C272, C274, and C277 together coordinate Zn(2+).

This sequence belongs to the archaeosine tRNA-ribosyltransferase family. Requires Zn(2+) as cofactor.

The catalysed reaction is guanosine(15) in tRNA + 7-cyano-7-deazaguanine = 7-cyano-7-carbaguanosine(15) in tRNA + guanine. The protein operates within tRNA modification; archaeosine-tRNA biosynthesis. In terms of biological role, exchanges the guanine residue with 7-cyano-7-deazaguanine (preQ0) at position 15 in the dihydrouridine loop (D-loop) of archaeal tRNAs. The chain is tRNA-guanine(15) transglycosylase from Aeropyrum pernix (strain ATCC 700893 / DSM 11879 / JCM 9820 / NBRC 100138 / K1).